The primary structure comprises 421 residues: Zinc finger protein 57 (421 aa).

One can recognise a KRAB domain in the interval 15-88 (VSYEDVAVSF…SCTGVFKGGP (74 aa)). The segment at 90 to 113 (FFCLTCGKCFKKNTFLFNHQFPVR) adopts a C2H2-type 1; degenerate zinc-finger fold. C2H2-type zinc fingers lie at residues 140–162 (FFCN…RRAH) and 168–190 (RSCP…LKVH). The disordered stretch occupies residues 191–221 (QNKPAASNQAGNQASNQRLKSRVPPTTPRSQ). Over residues 195 to 207 (AASNQAGNQASNQ) the composition is skewed to low complexity. The C2H2-type 4 zinc-finger motif lies at 264-286 (ISCPYCHITFTMRTCLLTHLKIH). Residues 313-332 (YTCPVCDSSFRGKESLLDHL) form a C2H2-type 5; degenerate zinc finger. Residues 371–421 (GKRMESRRRRRKRACTENPETEGLSGKGRVAPWEMEGATSPESPVTEEDSD) are disordered.

The protein belongs to the krueppel C2H2-type zinc-finger protein family. As to expression, expressed in oocytes and in a subset of adult tissues. Expressed at high levels in testis, and at low levels in cerebellum. Present in sciatic nerve and spinal cord (at protein level).

The protein localises to the nucleus. Functionally, transcription regulator required to maintain maternal and paternal gene imprinting, a process by which gene expression is restricted in a parent of origin-specific manner by epigenetic modification of genomic DNA and chromatin, including DNA methylation. Acts by controlling DNA methylation during the earliest multicellular stages of development at multiple imprinting control regions (ICRs). Acts together with ZNF445, but ZFP57 plays the predominant role in imprinting maintenance. In contrast, in humans, ZNF445 seems to be the major factor early embryonic imprinting maintenance. Required for the establishment of maternal methylation imprints at SNRPN locus. Acts as a transcriptional repressor in Schwann cells. Binds to a 5'-TGCCGC-3' consensus sequence and recognizes the methylated CpG within this element. The chain is Zinc finger protein 57 (Zfp57) from Mus musculus (Mouse).